Here is a 347-residue protein sequence, read N- to C-terminus: Phosphoribosylformylglycinamidine cyclo-ligase (347 aa).

This sequence belongs to the AIR synthase family.

It is found in the cytoplasm. It catalyses the reaction 2-formamido-N(1)-(5-O-phospho-beta-D-ribosyl)acetamidine + ATP = 5-amino-1-(5-phospho-beta-D-ribosyl)imidazole + ADP + phosphate + H(+). Its pathway is purine metabolism; IMP biosynthesis via de novo pathway; 5-amino-1-(5-phospho-D-ribosyl)imidazole from N(2)-formyl-N(1)-(5-phospho-D-ribosyl)glycinamide: step 2/2. The sequence is that of Phosphoribosylformylglycinamidine cyclo-ligase from Hydrogenovibrio crunogenus (strain DSM 25203 / XCL-2) (Thiomicrospira crunogena).